The following is a 208-amino-acid chain: 3-demethoxyubiquinol 3-hydroxylase (208 aa).

Fe cation contacts are provided by Glu-57, Glu-87, His-90, Glu-139, Glu-171, and His-174.

The protein belongs to the COQ7 family. It depends on Fe cation as a cofactor.

It localises to the cell membrane. The enzyme catalyses a 5-methoxy-2-methyl-3-(all-trans-polyprenyl)benzene-1,4-diol + AH2 + O2 = a 3-demethylubiquinol + A + H2O. Its pathway is cofactor biosynthesis; ubiquinone biosynthesis. Its function is as follows. Catalyzes the hydroxylation of 2-nonaprenyl-3-methyl-6-methoxy-1,4-benzoquinol during ubiquinone biosynthesis. This Burkholderia pseudomallei (strain 1106a) protein is 3-demethoxyubiquinol 3-hydroxylase.